An 838-amino-acid polypeptide reads, in one-letter code: Rho GTPase-activating protein 12 (838 aa).

One can recognise an SH3 domain in the interval 10–72 (AGQAYIEVEY…PAQYVKEVTR (63 aa)). Composition is skewed to polar residues over residues 155–172 (GKFN…QNRT) and 189–198 (TSFSQEQSCD). The segment at 155-239 (GKFNSDSHSP…PPNQGRPDSP (85 aa)) is disordered. S163 carries the post-translational modification Phosphoserine. 3 positions are modified to phosphoserine: S199, S211, and S213. A phosphothreonine mark is found at T228 and T229. The residue at position 238 (S238) is a Phosphoserine. Y241 is modified (phosphotyrosine). The WW 1 domain occupies 263–296 (IQVNGEWETHKDSSGRCYYYNRTTQERTWKPPRW). The span at 291 to 302 (WKPPRWARDVST) shows a compositional bias: basic and acidic residues. Positions 291–346 (WKPPRWARDVSTSRDFQSPGEQEPLSSEENYHSSCFSQSDSQCGSPPRGWSEELDE) are disordered. Residues 303-334 (SRDFQSPGEQEPLSSEENYHSSCFSQSDSQCG) show a composition bias toward polar residues. Residues 355–388 (DYTKEKWLKHVDDQGRQYYYSADGSRSEWELPKY) form the WW 2 domain. Residues 425-456 (DSNDKDSPTTTKLCLPENESPPTSSKHQDPGQ) form a disordered region. In terms of domain architecture, PH spans 466-567 (KITENGKKVR…WFKVLSSTIN (102 aa)). The segment covering 572–582 (EADEAAEEETP) has biased composition (acidic residues). A disordered region spans residues 572–620 (EADEAAEEETPDSPGVEKHDKEKDQKELKKLRSMKGSSMDSSEQKKTKK). S584 bears the Phosphoserine mark. The span at 586–601 (GVEKHDKEKDQKELKK) shows a compositional bias: basic and acidic residues. Residues 648–836 (SNLANLCQRE…LILLELSTVF (189 aa)) form the Rho-GAP domain.

Its function is as follows. GTPase activator for the Rho-type GTPases by converting them to an inactive GDP-bound state. This is Rho GTPase-activating protein 12 (Arhgap12) from Mus musculus (Mouse).